The following is a 232-amino-acid chain: Phosphatidylserine decarboxylase proenzyme (232 aa).

Residue Ser-190 is the Schiff-base intermediate with substrate; via pyruvic acid of the active site. Residue Ser-190 is modified to Pyruvic acid (Ser); by autocatalysis.

Belongs to the phosphatidylserine decarboxylase family. PSD-A subfamily. As to quaternary structure, heterodimer of a large membrane-associated beta subunit and a small pyruvoyl-containing alpha subunit. Requires pyruvate as cofactor. Post-translationally, is synthesized initially as an inactive proenzyme. Formation of the active enzyme involves a self-maturation process in which the active site pyruvoyl group is generated from an internal serine residue via an autocatalytic post-translational modification. Two non-identical subunits are generated from the proenzyme in this reaction, and the pyruvate is formed at the N-terminus of the alpha chain, which is derived from the carboxyl end of the proenzyme. The post-translation cleavage follows an unusual pathway, termed non-hydrolytic serinolysis, in which the side chain hydroxyl group of the serine supplies its oxygen atom to form the C-terminus of the beta chain, while the remainder of the serine residue undergoes an oxidative deamination to produce ammonia and the pyruvoyl prosthetic group on the alpha chain.

Its subcellular location is the cell membrane. It catalyses the reaction a 1,2-diacyl-sn-glycero-3-phospho-L-serine + H(+) = a 1,2-diacyl-sn-glycero-3-phosphoethanolamine + CO2. Its pathway is phospholipid metabolism; phosphatidylethanolamine biosynthesis; phosphatidylethanolamine from CDP-diacylglycerol: step 2/2. In terms of biological role, catalyzes the formation of phosphatidylethanolamine (PtdEtn) from phosphatidylserine (PtdSer). The sequence is that of Phosphatidylserine decarboxylase proenzyme from Cereibacter sphaeroides (strain KD131 / KCTC 12085) (Rhodobacter sphaeroides).